The chain runs to 369 residues: Aminomethyltransferase (369 aa).

The protein belongs to the GcvT family. As to quaternary structure, the glycine cleavage system is composed of four proteins: P, T, L and H.

It catalyses the reaction N(6)-[(R)-S(8)-aminomethyldihydrolipoyl]-L-lysyl-[protein] + (6S)-5,6,7,8-tetrahydrofolate = N(6)-[(R)-dihydrolipoyl]-L-lysyl-[protein] + (6R)-5,10-methylene-5,6,7,8-tetrahydrofolate + NH4(+). In terms of biological role, the glycine cleavage system catalyzes the degradation of glycine. The sequence is that of Aminomethyltransferase from Alkaliphilus metalliredigens (strain QYMF).